Here is a 619-residue protein sequence, read N- to C-terminus: 2-succinyl-5-enolpyruvyl-6-hydroxy-3-cyclohexene-1-carboxylate synthase (619 aa).

The span at Ser-385 to Ser-398 shows a compositional bias: polar residues. The tract at residues Ser-385–Ser-415 is disordered. Residues Ser-399 to Asn-413 show a composition bias toward acidic residues.

The protein belongs to the TPP enzyme family. MenD subfamily. As to quaternary structure, homodimer. Mg(2+) is required as a cofactor. Requires Mn(2+) as cofactor. It depends on thiamine diphosphate as a cofactor.

It catalyses the reaction isochorismate + 2-oxoglutarate + H(+) = 5-enolpyruvoyl-6-hydroxy-2-succinyl-cyclohex-3-ene-1-carboxylate + CO2. The protein operates within quinol/quinone metabolism; 1,4-dihydroxy-2-naphthoate biosynthesis; 1,4-dihydroxy-2-naphthoate from chorismate: step 2/7. It participates in quinol/quinone metabolism; menaquinone biosynthesis. In terms of biological role, catalyzes the thiamine diphosphate-dependent decarboxylation of 2-oxoglutarate and the subsequent addition of the resulting succinic semialdehyde-thiamine pyrophosphate anion to isochorismate to yield 2-succinyl-5-enolpyruvyl-6-hydroxy-3-cyclohexene-1-carboxylate (SEPHCHC). The chain is 2-succinyl-5-enolpyruvyl-6-hydroxy-3-cyclohexene-1-carboxylate synthase from Haloquadratum walsbyi (strain DSM 16790 / HBSQ001).